The following is a 282-amino-acid chain: V-set domain-containing T-cell activation inhibitor 1 (282 aa).

A signal peptide spans 1–24; sequence MASLGQIIFWSIINVIIILAGAIV. Ig-like V-type domains are found at residues 35–144 and 153–241; these read HFIT…ANLE and PEIN…IKVT. Disulfide bonds link Cys56–Cys130 and Cys168–Cys225. The N-linked (GlcNAc...) asparagine glycan is linked to Asn216. Gly257 is lipidated: GPI-anchor amidated glycine. A propeptide spans 258 to 282 (removed in mature form); sequence PSPCVSSVSAAGWALLSLSCCLMLR.

This sequence belongs to the immunoglobulin superfamily. BTN/MOG family. Post-translationally, N-glycosylated.

It is found in the cell membrane. Negatively regulates T-cell-mediated immune response by inhibiting T-cell activation, proliferation, cytokine production and development of cytotoxicity. When expressed on the cell surface of tumor macrophages, plays an important role, together with regulatory T-cells (Treg), in the suppression of tumor-associated antigen-specific T-cell immunity. Involved in promoting epithelial cell transformation. This chain is V-set domain-containing T-cell activation inhibitor 1, found in Rattus norvegicus (Rat).